The chain runs to 198 residues: Putative protein-methionine-sulfoxide reductase subunit YedZ1 (198 aa).

4 helical membrane passes run 12 to 32 (WLRVTHWLYVVAVVILVMSGW), 63 to 83 (FAAMWLLAVNGLIYLFFNIFS), 124 to 144 (AAYLFAIADIIVIVLSGLVLW), and 167 to 187 (FIGMSALVAFVGVHVAMVALV).

This sequence belongs to the HupC/HyaC/HydC family.

It localises to the cell inner membrane. Part of the YedY1-YedZ1 system that may repair oxidized proteins containing methionine sulfoxide residues (Met-O). The protein is Putative protein-methionine-sulfoxide reductase subunit YedZ1 of Azospira oryzae (strain ATCC BAA-33 / DSM 13638 / PS) (Dechlorosoma suillum).